The sequence spans 1371 residues: DNA-directed RNA polymerase subunit beta (1371 aa).

This sequence belongs to the RNA polymerase beta chain family. The RNAP catalytic core consists of 2 alpha, 1 beta, 1 beta' and 1 omega subunit. When a sigma factor is associated with the core the holoenzyme is formed, which can initiate transcription.

The catalysed reaction is RNA(n) + a ribonucleoside 5'-triphosphate = RNA(n+1) + diphosphate. Functionally, DNA-dependent RNA polymerase catalyzes the transcription of DNA into RNA using the four ribonucleoside triphosphates as substrates. The chain is DNA-directed RNA polymerase subunit beta from Geobacter sp. (strain M21).